The following is a 465-amino-acid chain: MFPNSPDAFHQVRMMQSSIKASNFKLQSMEFRCHSNNVCEYQMEMLHHLLSVEAKTLPNLSLIEQQPEIKLGMRPLLLDFLMEVITILSLSRSTFPLTVNLIDRYCSTRIVKKQHYQLLGLTSLWISCKNLDSKFKVPTLNDLRKICVDSYYKELFVEMEKHILKSLEWVVNAPTFDAFIDLYSNLLISNSSNFEVANIIKKSSHKIKLFSNYIGELFQFYPNIYYDYTSSQIALIAILITVLTLKIPVDLISLLNFYNGLVKTEMFKSNVEQGAEDQFEEILSVDSFKSLFNKSFFKNLIKIIDNPPSSLKIKYFAENGKYSVLMKQLVTTASNTLKCILDPVPTTPKANSFVKHQQQQHHYHPRPPMSINTSMIPLTPVSNSTSPNRFSPDQIFSENESTPGIAFGTMTPDSQSTSPGEKRSYECIDELEIGTSTIAGYTLKNHDTLKRSKSANYGTLFYLQQ.

Residues 44–171 (EMLHHLLSVE…HILKSLEWVV (128 aa)) form the Cyclin N-terminal domain.

It belongs to the cyclin family. In terms of assembly, interacts with CDC28 and SLA1. Post-translationally, hyperphosphorylated. GRR1 preferentially mediates the degradation of hyperphosphorylated CLN3.

In terms of biological role, G1/S-specific cyclin essential for the control of the cell cycle at the G1/S (start) transition. CLN3 may be an upstream activator of the G1 cyclins which directly catalyze start. Required for budding and for cell cycle progression and morphogenesis in environment-induced hyphae. Degradation is mediated by GRR1. Through binding to CDC28, controls the phosphorylation of SLA1 which regulates cortical actin patch dynamics. This is G1/S-specific cyclin CLN3 (CLN3) from Candida albicans (strain SC5314 / ATCC MYA-2876) (Yeast).